Reading from the N-terminus, the 227-residue chain is Cytochrome c oxidase subunit 2 (227 aa).

Topologically, residues 1-14 (MAYPFQLGLQDATS) are mitochondrial intermembrane. Residues 15–45 (PIMEELANFHDHTLMIVFLISSLVLYIISSM) form a helical membrane-spanning segment. At 46 to 59 (LTTKLTHTSTMDAQ) the chain is on the mitochondrial matrix side. The chain crosses the membrane as a helical span at residues 60-87 (EVETIWTILPAVILILIALPSLRILYMM). Residues 88–227 (DEINNPALTV…HFENWSASMI (140 aa)) are Mitochondrial intermembrane-facing. Residues histidine 161, cysteine 196, glutamate 198, cysteine 200, histidine 204, and methionine 207 each contribute to the Cu cation site. Glutamate 198 contributes to the Mg(2+) binding site.

This sequence belongs to the cytochrome c oxidase subunit 2 family. As to quaternary structure, component of the cytochrome c oxidase (complex IV, CIV), a multisubunit enzyme composed of 14 subunits. The complex is composed of a catalytic core of 3 subunits MT-CO1, MT-CO2 and MT-CO3, encoded in the mitochondrial DNA, and 11 supernumerary subunits COX4I, COX5A, COX5B, COX6A, COX6B, COX6C, COX7A, COX7B, COX7C, COX8 and NDUFA4, which are encoded in the nuclear genome. The complex exists as a monomer or a dimer and forms supercomplexes (SCs) in the inner mitochondrial membrane with NADH-ubiquinone oxidoreductase (complex I, CI) and ubiquinol-cytochrome c oxidoreductase (cytochrome b-c1 complex, complex III, CIII), resulting in different assemblies (supercomplex SCI(1)III(2)IV(1) and megacomplex MCI(2)III(2)IV(2)). Found in a complex with TMEM177, COA6, COX18, COX20, SCO1 and SCO2. Interacts with TMEM177 in a COX20-dependent manner. Interacts with COX20. Interacts with COX16. It depends on Cu cation as a cofactor.

It localises to the mitochondrion inner membrane. It carries out the reaction 4 Fe(II)-[cytochrome c] + O2 + 8 H(+)(in) = 4 Fe(III)-[cytochrome c] + 2 H2O + 4 H(+)(out). In terms of biological role, component of the cytochrome c oxidase, the last enzyme in the mitochondrial electron transport chain which drives oxidative phosphorylation. The respiratory chain contains 3 multisubunit complexes succinate dehydrogenase (complex II, CII), ubiquinol-cytochrome c oxidoreductase (cytochrome b-c1 complex, complex III, CIII) and cytochrome c oxidase (complex IV, CIV), that cooperate to transfer electrons derived from NADH and succinate to molecular oxygen, creating an electrochemical gradient over the inner membrane that drives transmembrane transport and the ATP synthase. Cytochrome c oxidase is the component of the respiratory chain that catalyzes the reduction of oxygen to water. Electrons originating from reduced cytochrome c in the intermembrane space (IMS) are transferred via the dinuclear copper A center (CU(A)) of subunit 2 and heme A of subunit 1 to the active site in subunit 1, a binuclear center (BNC) formed by heme A3 and copper B (CU(B)). The BNC reduces molecular oxygen to 2 water molecules using 4 electrons from cytochrome c in the IMS and 4 protons from the mitochondrial matrix. The sequence is that of Cytochrome c oxidase subunit 2 (MT-CO2) from Malacomys longipes (Big-eared swamp rat).